Consider the following 128-residue polypeptide: Arginine decarboxylase proenzyme (128 aa).

Ser76 (schiff-base intermediate with substrate; via pyruvic acid) is an active-site residue. Residue Ser76 is modified to Pyruvic acid (Ser); by autocatalysis. Residue His81 is the Proton acceptor; for processing activity of the active site. Cys96 (proton donor; for catalytic activity) is an active-site residue.

It belongs to the prokaryotic AdoMetDC family. Type 1 subfamily. Heterooctamer of four alpha and four beta chains arranged as a tetramer of alpha/beta heterodimers. Pyruvate is required as a cofactor. Post-translationally, is synthesized initially as an inactive proenzyme. Formation of the active enzyme involves a self-maturation process in which the active site pyruvoyl group is generated from an internal serine residue via an autocatalytic post-translational modification. Two non-identical subunits are generated from the proenzyme in this reaction, and the pyruvate is formed at the N-terminus of the alpha chain, which is derived from the carboxyl end of the proenzyme. The post-translation cleavage follows an unusual pathway, termed non-hydrolytic serinolysis, in which the side chain hydroxyl group of the serine supplies its oxygen atom to form the C-terminus of the beta chain, while the remainder of the serine residue undergoes an oxidative deamination to produce ammonia and the pyruvoyl group blocking the N-terminus of the alpha chain.

It carries out the reaction L-arginine + H(+) = agmatine + CO2. It functions in the pathway amine and polyamine biosynthesis; agmatine biosynthesis; agmatine from L-arginine: step 1/1. Its function is as follows. Specifically catalyzes the decarboxylation of L-arginine to agmatine. Has no S-adenosylmethionine decarboxylase (AdoMetDC) activity. This chain is Arginine decarboxylase proenzyme, found in Sulfurisphaera tokodaii (strain DSM 16993 / JCM 10545 / NBRC 100140 / 7) (Sulfolobus tokodaii).